The following is a 135-amino-acid chain: Small ribosomal subunit protein uS9 (135 aa).

The disordered stretch occupies residues 96 to 135 (SADNRKPLKTEGHLSRDPRAKERRKYGLKKARKAPQFSKR). Residues 97–115 (ADNRKPLKTEGHLSRDPRA) are compositionally biased toward basic and acidic residues. Basic residues predominate over residues 116-135 (KERRKYGLKKARKAPQFSKR).

This sequence belongs to the universal ribosomal protein uS9 family.

The polypeptide is Small ribosomal subunit protein uS9 (Prochlorococcus marinus (strain MIT 9313)).